The sequence spans 215 residues: High mobility group protein B1 (215 aa).

1–10 (MGKGDPKKPR) contributes to the heparin binding site. Residues 1–97 (MGKGDPKKPR…KFKDPNAPKR (97 aa)) form a sufficient for interaction with HAVCR2 region. 4 positions are modified to N6-acetyllysine: Lys-3, Lys-7, Lys-8, and Lys-12. Residues 3–15 (KGDPKKPRGKMSS) form an LPS binding (delipidated) region. Positions 9–79 (PRGKMSSYAF…RYEREMKTYI (71 aa)) form a DNA-binding region, HMG box 1. A Cysteine sulfonic acid (-SO3H); alternate modification is found at Cys-23. A disulfide bridge links Cys-23 with Cys-45. The Nuclear localization signal (NLS) 1 signature appears at 27-43 (HKKKHPDASVNFSEFSK). N6-acetyllysine is present on residues Lys-28, Lys-29, and Lys-30. Lys-28 is covalently cross-linked (Isoglutamyl lysine isopeptide (Lys-Gln) (interchain with Q-?)). Phosphoserine is present on Ser-35. Lys-43 bears the N6-acetyllysine mark. Isoglutamyl lysine isopeptide (Lys-Gln) (interchain with Q-?) cross-links involve residues Lys-43 and Lys-44. Cys-45 is subject to Cysteine sulfonic acid (-SO3H); alternate. A Phosphothreonine modification is found at Thr-51. Lys-68 participates in a covalent cross-link: Isoglutamyl lysine isopeptide (Lys-Gln) (interchain with Q-?). Positions 76 to 95 (KTYIPPKGETKKKFKDPNAP) are disordered. The tract at residues 80-96 (PPKGETKKKFKDPNAPK) is LPS binding (Lipid A). Positions 83–94 (GETKKKFKDPNA) are enriched in basic and acidic residues. The cytokine-stimulating activity stretch occupies residues 89–108 (FKDPNAPKRPPSAFFLFCSE). At Lys-90 the chain carries N6-acetyllysine. Residues 95–163 (PKRPPSAFFL…KYEKDIAAYR (69 aa)) constitute a DNA-binding region (HMG box 2). Ser-100 is subject to Phosphoserine. Cys-106 carries the cysteine sulfonic acid (-SO3H) modification. Lys-127, Lys-128, Lys-141, Lys-172, Lys-173, Lys-177, and Lys-180 each carry N6-acetyllysine. Positions 150–183 (KLKEKYEKDIAAYRAKGKPDAAKKGVVKAEKSKK) are binding to AGER/RAGE. Residues 162-179 (YRAKGKPDAAKKGVVKAE) show a composition bias toward basic and acidic residues. Residues 162–215 (YRAKGKPDAAKKGVVKAEKSKKKKEEEEDEEDEEDEEEEEDEEDEEEEEDDDDE) form a disordered region. The Nuclear localization signal (NLS) 2 signature appears at 178 to 184 (AEKSKKK). Lys-180 is covalently cross-linked (Isoglutamyl lysine isopeptide (Lys-Gln) (interchain with Q-?)). The residue at position 181 (Ser-181) is an ADP-ribosylserine. N6-acetyllysine occurs at positions 182, 183, 184, and 185. Residues Lys-182, Lys-183, and Lys-184 each participate in an isoglutamyl lysine isopeptide (Lys-Gln) (interchain with Q-?) cross-link. The segment covering 187–215 (EEEDEEDEEDEEEEEDEEDEEEEEDDDDE) has biased composition (acidic residues).

Belongs to the HMGB family. In terms of assembly, interacts (fully reduced HMGB1) with CXCL12; probably in a 1:2 ratio involving two molecules of CXCL12, each interacting with one HMG box of HMGB1; inhibited by glycyrrhizin. Associates with the TLR4:LY96 receptor complex. Component of the RAG complex composed of core components RAG1 and RAG2, and associated component HMGB1 or HMGB2. Interacts (in cytoplasm upon starvation) with BECN1; inhibits the interaction of BECN1 and BCL2 leading to promotion of autophagy. Interacts with KPNA1; involved in nuclear import. Interacts with SREBF1, TLR2, TLR4, TLR9, PTPRZ1, APEX1, FEN1, POLB, TERT. Interacts with IL1B, AGER, MSH2, XPA, XPC, HNF1A, TP53. Interacts with CD24; the probable CD24:SIGLEC10 complex is proposed to inhibit HGMB1-mediated tissue damage immune response. Interacts with THBD; prevents HGMB1 interaction with ACER/RAGE and inhibits HGMB1 pro-inflammatory activity. Interacts with HAVCR2; impairs HMGB1 binding to B-DNA and likely HMGB1-mediated innate immune response. Interacts with XPO1; mediating nuclear export. Interacts with receptor RAGE/AGER. In terms of processing, phosphorylated at serine residues. Phosphorylation in both NLS regions is required for cytoplasmic translocation followed by secretion. Phosphorylation at Thr-51 within the NLS is crucial for secretion induced by porcine reproductive and respiratory syndrome virus (PRRSV). Acetylated on multiple sites upon stimulation with LPS. Acetylation on lysine residues in the nuclear localization signals (NLS 1 and NLS 2) leads to cytoplasmic localization and subsequent secretion. Acetylation on Lys-3 results in preferential binding to DNA ends and impairs DNA bending activity. Post-translationally, reduction/oxidation of cysteine residues Cys-23, Cys-45 and Cys-106 and a possible intramolecular disulfide bond involving Cys-23 and Cys-45 give rise to different redox forms with specific functional activities in various cellular compartments: 1- fully reduced HMGB1 (HMGB1C23hC45hC106h), 2- disulfide HMGB1 (HMGB1C23-C45C106h) and 3- sulfonyl HMGB1 (HMGB1C23soC45soC106so). In terms of processing, poly-ADP-ribosylated by PARP1 when secreted following stimulation with LPS. In vitro cleavage by CASP1 is liberating a HMG box 1-containing peptide which may mediate immunogenic activity; the peptide antagonizes apoptosis-induced immune tolerance. Can be proteolytically cleaved by a thrombin:thrombomodulin complex; reduces binding to heparin and pro-inflammatory activities. Post-translationally, forms covalent cross-links mediated by transglutaminase TGM2, between a glutamine and the epsilon-amino group of a lysine residue, forming homopolymers and heteropolymers.

It localises to the nucleus. The protein localises to the chromosome. The protein resides in the cytoplasm. Its subcellular location is the secreted. It is found in the cell membrane. It localises to the endosome. The protein localises to the endoplasmic reticulum-Golgi intermediate compartment. In terms of biological role, multifunctional redox sensitive protein with various roles in different cellular compartments. In the nucleus is one of the major chromatin-associated non-histone proteins and acts as a DNA chaperone involved in replication, transcription, chromatin remodeling, V(D)J recombination, DNA repair and genome stability. Proposed to be an universal biosensor for nucleic acids. Promotes host inflammatory response to sterile and infectious signals and is involved in the coordination and integration of innate and adaptive immune responses. In the cytoplasm functions as a sensor and/or chaperone for immunogenic nucleic acids implicating the activation of TLR9-mediated immune responses, and mediates autophagy. Acts as a danger-associated molecular pattern (DAMP) molecule that amplifies immune responses during tissue injury. Released to the extracellular environment can bind DNA, nucleosomes, IL-1 beta, CXCL12, AGER isoform 2/sRAGE, lipopolysaccharide (LPS) and lipoteichoic acid (LTA), and activates cells through engagement of multiple surface receptors. In the extracellular compartment fully reduced HMGB1 (released by necrosis) acts as a chemokine, disulfide HMGB1 (actively secreted) as a cytokine, and sulfonyl HMGB1 (released from apoptotic cells) promotes immunological tolerance. Has proangiogenic activity. May be involved in platelet activation. Binds to phosphatidylserine and phosphatidylethanolamide. Bound to RAGE mediates signaling for neuronal outgrowth. May play a role in accumulation of expanded polyglutamine (polyQ) proteins. Functionally, nuclear functions are attributed to fully reduced HGMB1. Associates with chromatin and binds DNA with a preference to non-canonical DNA structures such as single-stranded DNA, DNA-containing cruciforms or bent structures, supercoiled DNA and ZDNA. Can bent DNA and enhance DNA flexibility by looping thus providing a mechanism to promote activities on various gene promoters by enhancing transcription factor binding and/or bringing distant regulatory sequences into close proximity. May be involved in nucleotide excision repair (NER), mismatch repair (MMR) and base excision repair (BER) pathways, and double strand break repair such as non-homologous end joining (NHEJ). Involved in V(D)J recombination by acting as a cofactor of the RAG complex: acts by stimulating cleavage and RAG protein binding at the 23 bp spacer of conserved recombination signal sequences (RSS). In vitro can displace histone H1 from highly bent DNA. Can restructure the canonical nucleosome leading to relaxation of structural constraints for transcription factor-binding. Enhances binding of sterol regulatory element-binding proteins (SREBPs) such as SREBF1 to their cognate DNA sequences and increases their transcriptional activities. Facilitates binding of TP53 to DNA. May be involved in mitochondrial quality control and autophagy in a transcription-dependent fashion implicating HSPB1. Can modulate the activity of the telomerase complex and may be involved in telomere maintenance. Represses porcine circovirus type 2 replication within the nucleus by binding to the Ori region of the viral genome. In the cytoplasm proposed to dissociate the BECN1:BCL2 complex via competitive interaction with BECN1 leading to autophagy activation. Can protect BECN1 and ATG5 from calpain-mediated cleavage and thus proposed to control their proautophagic and proapoptotic functions and to regulate the extent and severity of inflammation-associated cellular injury. In myeloid cells has a protective role against endotoxemia and bacterial infection by promoting autophagy. Involved in endosomal translocation and activation of TLR9 in response to CpG-DNA in macrophages. Its function is as follows. In the extracellular compartment (following either active secretion or passive release) involved in regulation of the inflammatory response. Fully reduced HGMB1 (which subsequently gets oxidized after release) in association with CXCL12 mediates the recruitment of inflammatory cells during the initial phase of tissue injury; the CXCL12:HMGB1 complex triggers CXCR4 homodimerization. Induces the migration of monocyte-derived immature dendritic cells and seems to regulate adhesive and migratory functions of neutrophils implicating AGER/RAGE and ITGAM. Can bind to various types of DNA and RNA including microbial unmethylated CpG-DNA to enhance the innate immune response to nucleic acids. Proposed to act in promiscuous DNA/RNA sensing which cooperates with subsequent discriminative sensing by specific pattern recognition receptors. Promotes extracellular DNA-induced AIM2 inflammasome activation implicating AGER/RAGE. Disulfide HMGB1 binds to transmembrane receptors, such as AGER/RAGE, TLR2, TLR4 and probably TREM1, thus activating their signal transduction pathways. Mediates the release of cytokines/chemokines such as TNF, IL-1, IL-6, IL-8, CCL2, CCL3, CCL4 and CXCL10. Promotes secretion of interferon-gamma by macrophage-stimulated natural killer (NK) cells in concert with other cytokines like IL-2 or IL-12. TLR4 is proposed to be the primary receptor promoting macrophage activation and signaling through TLR4 seems to implicate LY96/MD-2. In bacterial LPS- or LTA-mediated inflammatory responses binds to the endotoxins and transfers them to CD14 for signaling to the respective TLR4:LY96 and TLR2 complexes. Contributes to tumor proliferation by association with ACER/RAGE. Can bind to IL1-beta and signals through the IL1R1:IL1RAP receptor complex. Binding to class A CpG activates cytokine production in plasmacytoid dendritic cells implicating TLR9, MYD88 and AGER/RAGE and can activate autoreactive B cells. Via HMGB1-containing chromatin immune complexes may also promote B cell responses to endogenous TLR9 ligands through a B-cell receptor (BCR)-dependent and ACER/RAGE-independent mechanism. Inhibits phagocytosis of apoptotic cells by macrophages; the function is dependent on poly-ADP-ribosylation and involves binding to phosphatidylserine on the cell surface of apoptotic cells. In adaptive immunity may be involved in enhancing immunity through activation of effector T cells and suppression of regulatory T (TReg) cells. In contrast, without implicating effector or regulatory T-cells, required for tumor infiltration and activation of T-cells expressing the lymphotoxin LTA:LTB heterotrimer thus promoting tumor malignant progression. Also reported to limit proliferation of T-cells. Released HMGB1:nucleosome complexes formed during apoptosis can signal through TLR2 to induce cytokine production. Involved in induction of immunological tolerance by apoptotic cells; its pro-inflammatory activities when released by apoptotic cells are neutralized by reactive oxygen species (ROS)-dependent oxidation specifically on Cys-106. During macrophage activation by activated lymphocyte-derived self apoptotic DNA (ALD-DNA) promotes recruitment of ALD-DNA to endosomes. In Sus scrofa (Pig), this protein is High mobility group protein B1 (HMGB1).